The following is a 392-amino-acid chain: Formate-dependent phosphoribosylglycinamide formyltransferase (392 aa).

N(1)-(5-phospho-beta-D-ribosyl)glycinamide is bound by residues 20–21 (EL) and glutamate 80. Residues arginine 112, lysine 153, 158–163 (SSGKGQ), 193–196 (EGFV), and glutamate 201 each bind ATP. The 190-residue stretch at 117 to 306 (RLAAEELGLP…EFALHVRAIL (190 aa)) folds into the ATP-grasp domain. Residues glutamate 265 and glutamate 277 each coordinate Mg(2+). Residues aspartate 284, lysine 355, and 362–363 (RR) each bind N(1)-(5-phospho-beta-D-ribosyl)glycinamide.

Belongs to the PurK/PurT family. In terms of assembly, homodimer.

The enzyme catalyses N(1)-(5-phospho-beta-D-ribosyl)glycinamide + formate + ATP = N(2)-formyl-N(1)-(5-phospho-beta-D-ribosyl)glycinamide + ADP + phosphate + H(+). The protein operates within purine metabolism; IMP biosynthesis via de novo pathway; N(2)-formyl-N(1)-(5-phospho-D-ribosyl)glycinamide from N(1)-(5-phospho-D-ribosyl)glycinamide (formate route): step 1/1. Its function is as follows. Involved in the de novo purine biosynthesis. Catalyzes the transfer of formate to 5-phospho-ribosyl-glycinamide (GAR), producing 5-phospho-ribosyl-N-formylglycinamide (FGAR). Formate is provided by PurU via hydrolysis of 10-formyl-tetrahydrofolate. The polypeptide is Formate-dependent phosphoribosylglycinamide formyltransferase (Aeromonas salmonicida (strain A449)).